The primary structure comprises 201 residues: Pectinesterase inhibitor 7 (201 aa).

The signal sequence occupies residues 1–24 (MARNFELSLILFVLYLSTAAIVMA). Cystine bridges form between C42–C51 and C108–C159.

It belongs to the PMEI family. In terms of assembly, binds reversibly to PME3 to inhibit its activity; the stability of the PME3-PMEI7 complex and the inhibition of the pectin methylesterase (PME) activity is pH-dependent, based on protonation status of amino-acids at the complex interface. As to expression, accumulates in etiolated hypocotyls (at protein level).

The protein localises to the secreted. It is found in the extracellular space. The protein resides in the apoplast. Its subcellular location is the cell wall. Functionally, pectin methylesterase (PME) inhibitor that can target PME3 in a pH-dependent manner, mainly in slightly acidic conditions (pH 6.0 and 5.0) but not at pH 7.0; this processus relies on changes in the protonation of amino acids involved in intermolecular and intramolecular interactions. Regulates homogalacturonan methylesterification during plant development. The polypeptide is Pectinesterase inhibitor 7 (Arabidopsis thaliana (Mouse-ear cress)).